The primary structure comprises 601 residues: Probable translation initiation factor IF-2 (601 aa).

Residues 14–229 enclose the tr-type G domain; that stretch reads LRTPIVAVLG…VMMGLSQRYM (216 aa). The segment at 23 to 30 is G1; that stretch reads GHVDHGKT. 23 to 30 is a GTP binding site; that stretch reads GHVDHGKT. The segment at 48 to 52 is G2; it reads AITQH. Residues 85–88 are G3; that stretch reads DTPG. Residues 85–89 and 139–142 each bind GTP; these read DTPGH and NKID. A G4 region spans residues 139–142; sequence NKID. The tract at residues 207–209 is G5; sequence SAE.

It belongs to the TRAFAC class translation factor GTPase superfamily. Classic translation factor GTPase family. IF-2 subfamily.

In terms of biological role, function in general translation initiation by promoting the binding of the formylmethionine-tRNA to ribosomes. Seems to function along with eIF-2. This is Probable translation initiation factor IF-2 from Haloarcula marismortui (strain ATCC 43049 / DSM 3752 / JCM 8966 / VKM B-1809) (Halobacterium marismortui).